The following is an 816-amino-acid chain: Sucrose synthase 2 (816 aa).

The GT-B glycosyltransferase stretch occupies residues 280–757 (MVLNVVILSP…GLQRIEEKYT (478 aa)).

The protein belongs to the glycosyltransferase 1 family. Plant sucrose synthase subfamily. In terms of assembly, forms homotetramers and heterotetramers with SS1, all three possible heterotetramers are formed. Abundant in developing endosperm, low in aleurone, and undetected in coleoptiles and roots. Also detected in crude extracts of anthers and in immature embryos.

The catalysed reaction is an NDP-alpha-D-glucose + D-fructose = a ribonucleoside 5'-diphosphate + sucrose + H(+). Sucrose-cleaving enzyme that provides UDP-glucose and fructose for various metabolic pathways. This chain is Sucrose synthase 2 (SS2), found in Hordeum vulgare (Barley).